A 212-amino-acid polypeptide reads, in one-letter code: Stem bromelain (212 aa).

2 cysteine pairs are disulfide-bonded: Cys-23/Cys-63 and Cys-57/Cys-96. Residue Cys-26 is part of the active site. A glycan (N-linked (GlcNAc...) asparagine) is linked at Asn-117. Cys-152 and Cys-199 are oxidised to a cystine. The active site involves His-158.

It belongs to the peptidase C1 family.

The enzyme catalyses Broad specificity for cleavage of proteins, but strong preference for Z-Arg-Arg-|-NHMec among small molecule substrates.. Functionally, cysteine proteinase with a high level of diversity in substrate specificity. The polypeptide is Stem bromelain (Ananas comosus (Pineapple)).